We begin with the raw amino-acid sequence, 445 residues long: C4-dicarboxylate transport protein (445 aa).

The next 8 membrane-spanning stretches (helical) occupy residues 24–44 (VLYV…WVSP), 62–82 (LIKM…IAHI), 105–125 (FALI…GLAA), 163–183 (GDIL…MALG), 201–221 (FGVI…AMAF), 237–257 (LVAL…GLIA), 322–342 (IYMT…LTFT), and 370–390 (AGTL…VFSI).

It belongs to the dicarboxylate/amino acid:cation symporter (DAACS) (TC 2.A.23) family.

The protein resides in the cell inner membrane. Functionally, responsible for the transport of dicarboxylates such as succinate, fumarate, and malate from the periplasm across the membrane. This chain is C4-dicarboxylate transport protein, found in Rhodopseudomonas palustris (strain BisB5).